The chain runs to 284 residues: 4-hydroxy-3-methylbut-2-enyl diphosphate reductase (284 aa).

C12 provides a ligand contact to [4Fe-4S] cluster. Residues H40 and H72 each contribute to the (2E)-4-hydroxy-3-methylbut-2-enyl diphosphate site. H40 and H72 together coordinate dimethylallyl diphosphate. The isopentenyl diphosphate site is built by H40 and H72. A [4Fe-4S] cluster-binding site is contributed by C94. H122 is a binding site for (2E)-4-hydroxy-3-methylbut-2-enyl diphosphate. Residue H122 participates in dimethylallyl diphosphate binding. H122 contributes to the isopentenyl diphosphate binding site. Catalysis depends on E124, which acts as the Proton donor. Residue T161 coordinates (2E)-4-hydroxy-3-methylbut-2-enyl diphosphate. Residue C193 participates in [4Fe-4S] cluster binding. S221, N223, and S264 together coordinate (2E)-4-hydroxy-3-methylbut-2-enyl diphosphate. The dimethylallyl diphosphate site is built by S221, N223, and S264. S221, N223, and S264 together coordinate isopentenyl diphosphate.

It belongs to the IspH family. [4Fe-4S] cluster serves as cofactor.

It carries out the reaction isopentenyl diphosphate + 2 oxidized [2Fe-2S]-[ferredoxin] + H2O = (2E)-4-hydroxy-3-methylbut-2-enyl diphosphate + 2 reduced [2Fe-2S]-[ferredoxin] + 2 H(+). It catalyses the reaction dimethylallyl diphosphate + 2 oxidized [2Fe-2S]-[ferredoxin] + H2O = (2E)-4-hydroxy-3-methylbut-2-enyl diphosphate + 2 reduced [2Fe-2S]-[ferredoxin] + 2 H(+). It functions in the pathway isoprenoid biosynthesis; dimethylallyl diphosphate biosynthesis; dimethylallyl diphosphate from (2E)-4-hydroxy-3-methylbutenyl diphosphate: step 1/1. It participates in isoprenoid biosynthesis; isopentenyl diphosphate biosynthesis via DXP pathway; isopentenyl diphosphate from 1-deoxy-D-xylulose 5-phosphate: step 6/6. Its function is as follows. Catalyzes the conversion of 1-hydroxy-2-methyl-2-(E)-butenyl 4-diphosphate (HMBPP) into a mixture of isopentenyl diphosphate (IPP) and dimethylallyl diphosphate (DMAPP). Acts in the terminal step of the DOXP/MEP pathway for isoprenoid precursor biosynthesis. In Dehalococcoides mccartyi (strain ATCC BAA-2100 / JCM 16839 / KCTC 5957 / BAV1), this protein is 4-hydroxy-3-methylbut-2-enyl diphosphate reductase.